A 312-amino-acid chain; its full sequence is Cobalamin biosynthesis protein CobD (312 aa).

4 consecutive transmembrane segments (helical) span residues 61–81, 83–103, 152–172, and 292–312; these read IALL…LPLL, IIVP…AQHA, DAVF…AVLY, and GMWL…AIHA.

This sequence belongs to the CobD/CbiB family.

It localises to the cell membrane. It participates in cofactor biosynthesis; adenosylcobalamin biosynthesis. Its function is as follows. Converts cobyric acid to cobinamide by the addition of aminopropanol on the F carboxylic group. This chain is Cobalamin biosynthesis protein CobD, found in Chromobacterium violaceum (strain ATCC 12472 / DSM 30191 / JCM 1249 / CCUG 213 / NBRC 12614 / NCIMB 9131 / NCTC 9757 / MK).